Here is a 902-residue protein sequence, read N- to C-terminus: Phosphoenolpyruvate carboxylase (902 aa).

His132 is an active-site residue. The disordered stretch occupies residues 327–346 (DALERPEKTAGKKSSKRTPY). Residue Lys561 is part of the active site.

It belongs to the PEPCase type 1 family. Mg(2+) is required as a cofactor.

It catalyses the reaction oxaloacetate + phosphate = phosphoenolpyruvate + hydrogencarbonate. Its function is as follows. Forms oxaloacetate, a four-carbon dicarboxylic acid source for the tricarboxylic acid cycle. The sequence is that of Phosphoenolpyruvate carboxylase from Corynebacterium diphtheriae (strain ATCC 700971 / NCTC 13129 / Biotype gravis).